We begin with the raw amino-acid sequence, 490 residues long: CUGBP Elav-like family member 1 (490 aa).

RRM domains lie at 16–99 and 108–188; these read IKMF…PADS and RKLF…FADT. Residues 283-312 are disordered; the sequence is PSAGSALTTSSSPLSILTSSGSSPSSNNNS. The RRM 3 domain occupies 405–483; that stretch reads ANLFIYHLPQ…KRLKVQLKRS (79 aa).

Belongs to the CELF/BRUNOL family. As to quaternary structure, oligomer. Oligomerization is required for RNA-binding and EDEN-dependent deadenylation. Post-translationally, phosphorylated during oocyte maturation and dephosphorylated following egg activation. Dephosphorylation is calcium dependent and correlates with the increase in the activity of EDEN-dependent deadenylation.

Its subcellular location is the nucleus. The protein localises to the cytoplasm. Functionally, RNA-binding protein implicated in the regulation of several post-transcriptional events. May be involved in pre-mRNA alternative splicing, mRNA translation activation and stability. Mediates the rapid and sequence-specific cytoplasmic deadenylation of EDEN-containing maternal mRNAs following fertilization. Binds to AU-rich sequences (AREs) of jun mRNA. Binds to the embryonic deadenylation element (EDEN) motif localized in the 3'-UTR of maternal mRNAs. Binds to RNA containing several repeats of the consensus sequence 5'-UGU-3'. EDEN-dependent deadenylation is enhanced by the presence of an additional cis element composed of three AUU repeats. This chain is CUGBP Elav-like family member 1 (celf1), found in Xenopus tropicalis (Western clawed frog).